We begin with the raw amino-acid sequence, 240 residues long: Ubiquinone biosynthesis O-methyltransferase (240 aa).

S-adenosyl-L-methionine contacts are provided by arginine 44, glycine 64, aspartate 85, and methionine 129.

This sequence belongs to the methyltransferase superfamily. UbiG/COQ3 family.

The catalysed reaction is a 3-demethylubiquinol + S-adenosyl-L-methionine = a ubiquinol + S-adenosyl-L-homocysteine + H(+). It carries out the reaction a 3-(all-trans-polyprenyl)benzene-1,2-diol + S-adenosyl-L-methionine = a 2-methoxy-6-(all-trans-polyprenyl)phenol + S-adenosyl-L-homocysteine + H(+). Its pathway is cofactor biosynthesis; ubiquinone biosynthesis. In terms of biological role, O-methyltransferase that catalyzes the 2 O-methylation steps in the ubiquinone biosynthetic pathway. This Escherichia coli (strain UTI89 / UPEC) protein is Ubiquinone biosynthesis O-methyltransferase.